The following is a 135-amino-acid chain: Large ribosomal subunit protein uL16c (135 aa).

It belongs to the universal ribosomal protein uL16 family. Part of the 50S ribosomal subunit.

The protein resides in the plastid. The protein localises to the chloroplast. The chain is Large ribosomal subunit protein uL16c from Drimys granadensis.